Reading from the N-terminus, the 92-residue chain is Small ribosomal subunit protein uS19 (92 aa).

The protein belongs to the universal ribosomal protein uS19 family.

Its function is as follows. Protein S19 forms a complex with S13 that binds strongly to the 16S ribosomal RNA. The protein is Small ribosomal subunit protein uS19 of Neisseria gonorrhoeae (strain ATCC 700825 / FA 1090).